The primary structure comprises 226 residues: Calcium-binding protein 1 (226 aa).

Glycine 2 carries the N-myristoyl glycine lipid modification. Cysteine 4 carries S-palmitoyl cysteine lipidation. EF-hand domains follow at residues 81 to 116 (EEIEELREAFREFDKDKDGYINCRDLGNCMRTMGYM), 135 to 152 (GHVDFDDFVELMGPKLLA), 158 to 193 (IGVKELRDAFREFDTNGDGEISTSELREAMRKLLGH), and 195 to 226 (VGHRDIEEIIRDVDLNGDGRVDFEEFVRMMSR). Residues aspartate 94, aspartate 96, aspartate 98, tyrosine 100, and aspartate 105 each coordinate Ca(2+). Residues aspartate 171, asparagine 173, aspartate 175, and glutamate 177 each contribute to the Ca(2+) site. Residue serine 179 is modified to Phosphoserine. Ca(2+) is bound by residues glutamate 182, aspartate 208, asparagine 210, aspartate 212, arginine 214, and glutamate 219.

In terms of assembly, homodimer. Interacts (via C-terminus) with ITPR1, ITPR2 and ITPR3. This binding is calcium dependent and the interaction correlates with calcium concentration. An additional calcium-independent interaction with the N-terminus of ITPR1 results in a decreased InsP(3) binding to the receptor. Interacts with CACNA1A (via C-terminal CDB motif) in the pre- and postsynaptic membranes. Interacts with CACNA1C (via C-terminal C and IQ motifs). Interacts with CACNA1D. The binding to the C motif is calcium independent whereas the binding to IQ requires the presence of calcium and is mutually exclusive with calmodulin binding. Interacts with TRPC5 (via C-terminus). Interacts (via EF-hands 1 and 2) at microtubules with MAP1LC3B. Interacts with MYO1C. Interacts (via EF-hands 1 and 2) with NSMF (via the central NLS-containing motif region), the interaction occurs in a calcium dependent manner after synaptic NMDA receptor stimulation and prevents nuclear import of NSMF. Interacts with SPACA9. Post-translationally, phosphorylated. The phosphorylation regulates the activity.

It localises to the cytoplasm. The protein resides in the cytoskeleton. Its subcellular location is the perinuclear region. It is found in the cell membrane. The protein localises to the golgi apparatus. It localises to the postsynaptic density. Modulates calcium-dependent activity of inositol 1,4,5-triphosphate receptors (ITPRs). Inhibits agonist-induced intracellular calcium signaling. Enhances inactivation and does not support calcium-dependent facilitation of voltage-dependent P/Q-type calcium channels. Causes calcium-dependent facilitation and inhibits inactivation of L-type calcium channels by binding to the same sites as calmodulin in the C-terminal domain of CACNA1C, but has an opposite effect on channel function. Suppresses the calcium-dependent inactivation of CACNA1D. Inhibits TRPC5 channels. Prevents NMDA receptor-induced cellular degeneration. Required for the normal transfer of light signals through the retina. The protein is Calcium-binding protein 1 (CABP1) of Bos taurus (Bovine).